Here is a 293-residue protein sequence, read N- to C-terminus: 4-hydroxy-tetrahydrodipicolinate synthase (293 aa).

Threonine 44 is a pyruvate binding site. Residue tyrosine 132 is the Proton donor/acceptor of the active site. Lysine 161 functions as the Schiff-base intermediate with substrate in the catalytic mechanism. Pyruvate is bound at residue isoleucine 203.

The protein belongs to the DapA family. As to quaternary structure, homotetramer; dimer of dimers.

It is found in the cytoplasm. It catalyses the reaction L-aspartate 4-semialdehyde + pyruvate = (2S,4S)-4-hydroxy-2,3,4,5-tetrahydrodipicolinate + H2O + H(+). It functions in the pathway amino-acid biosynthesis; L-lysine biosynthesis via DAP pathway; (S)-tetrahydrodipicolinate from L-aspartate: step 3/4. Functionally, catalyzes the condensation of (S)-aspartate-beta-semialdehyde [(S)-ASA] and pyruvate to 4-hydroxy-tetrahydrodipicolinate (HTPA). This Sulfurihydrogenibium sp. (strain YO3AOP1) protein is 4-hydroxy-tetrahydrodipicolinate synthase.